The primary structure comprises 229 residues: Putative germin-like protein 12-3 (229 aa).

A signal peptide spans 1-22 (MASSNFFLLIPLIALVTTQAMA). Cysteines 32 and 47 form a disulfide. A Cupin type-1 domain is found at 62-217 (ANLDKPMDIT…AFQVDKKAVD (156 aa)). Asn78 carries an N-linked (GlcNAc...) asparagine glycan. 4 residues coordinate Mn(2+): His111, His113, Glu118, and His162.

The protein belongs to the germin family. In terms of assembly, oligomer (believed to be a pentamer but probably hexamer).

It is found in the secreted. The protein localises to the extracellular space. It localises to the apoplast. Functionally, may play a role in plant defense. Probably has no oxalate oxidase activity even if the active site is conserved. In Oryza sativa subsp. japonica (Rice), this protein is Putative germin-like protein 12-3.